The primary structure comprises 123 residues: Protein LLP homolog (123 aa).

Positions 1-21 (MAKSIRSKWKRKMRAEKRKKN) are enriched in basic residues. 2 disordered regions span residues 1–23 (MAKS…KNAP) and 55–123 (KINE…KLAW). The span at 70-89 (DSSKMDMELKRNKKNLRDQH) shows a compositional bias: basic and acidic residues. A compositionally biased stretch (basic residues) spans 100-123 (QQKKLKSQCGKKKGKSKQAKKLAW).

Belongs to the learning-associated protein family.

It localises to the nucleus. Its subcellular location is the nucleolus. It is found in the chromosome. Regulates dendritic and spine growth and synaptic transmission. In Xenopus tropicalis (Western clawed frog), this protein is Protein LLP homolog (llph).